The sequence spans 524 residues: Calcium-dependent protein kinase 1 (524 aa).

The disordered stretch occupies residues 1–34 (MGCSQSSNVKDFKTRRSKFTNGNNYGKSGNNKNS). Gly-2 is lipidated: N-myristoyl glycine. The S-palmitoyl cysteine moiety is linked to residue Cys-3. The short motif at 10 to 20 (KDFKTRRSKFT) is the Basic cluster involved in membrane binding element. Phosphoserine; by autocatalysis is present on residues Ser-17, Ser-28, and Ser-34. Low complexity predominate over residues 21-32 (NGNNYGKSGNNK). The region spanning 56–325 (YFKVRKLGSG…AKEALNSKWI (270 aa)) is the Protein kinase domain. Residues 62–70 (LGSGAYGEV) and Lys-85 each bind ATP. Position 64 is a phosphoserine; by PKG; by autocatalysis (Ser-64). Thr-100 bears the Phosphothreonine; by autocatalysis mark. Phosphoserine; by autocatalysis is present on Ser-118. The active-site Proton acceptor is Asp-191. Ser-217 carries the phosphoserine modification. Ser-220 carries the post-translational modification Phosphoserine; by autocatalysis. Position 231 is a phosphothreonine; by PKG; by autocatalysis (Thr-231). At Ser-335 the chain carries Phosphoserine; by autocatalysis. The J domain autoinhibitory motif motif lies at 346-353 (NMRKFEGS). A j domain region spans residues 346–364 (NMRKFEGSQKLAQAAILFI). Positions 354–364 (QKLAQAAILFI) match the J domain interacts with the EF-hand domains motif. 4 EF-hand domains span residues 372 to 407 (EERK…LRSF), 416 to 451 (NVEE…KQIL), 452 to 487 (FSEE…TSIS), and 488 to 521 (EQMW…ICDN). Ca(2+) is bound by residues Asp-385, Asn-387, Asp-389, Gln-391, Glu-396, Asp-429, Asp-431, Asn-433, Tyr-435, Glu-440, Asp-465, Asp-467, Ser-469, Lys-471, Glu-476, Asp-499, Asn-501, Asp-503, Met-505, and Glu-510.

The protein belongs to the protein kinase superfamily. Ser/Thr protein kinase family. CDPK subfamily. In terms of assembly, monomer. Forms a high molecular weight (250 and 400 kDa) complex. Forms a complex composed of CDPK1, PKA regulatory subunit PKAr and 14-3-3I; the complex is formed in merozoites in response to low extracellular level of K(+) and may play a role in microneme secretion. Interacts (when phosphorylated) with 14-3-3I in a Ca(2+)-independent manner; the interaction does not regulate CDPK1 catalytic activity but is required for merozoite invasion of host erythrocytes. Interacts with PKA regulatory subunit PKAr; in a Ca(2+)-dependent manner. Interacts with SERA5 p50 in the late schizont stage. Interacts with inner membrane complex protein IMC1g in late schizonts. Interacts with rhoptry protein RhopH3 in merozoites. The cofactor is Mg(2+). Post-translationally, myristoylated. Myristoylation, palmitoylation and the basic cluster motif are required for the localization to the parasitophorous vacuole membrane. In terms of processing, palmitoylated. Palmitoylation increases in merozoites in response to low level of extracellular K(+) in the host blood. Myristoylation, palmitoylation and the basic cluster motif are required for the localization to the parasitophorous vacuole membrane. Phosphorylation at Ser-64 occurs at late schizont stage and regulates CDPK1 protein-protein interaction. Phosphorylated at Ser-28, Ser-34 and Ser-64 in merozoites in response to low extracellular level of K(+). Phosphorylation at Thr-231 may regulate CDPK1 kinase activity. Phosphorylation increases in response to an increase in intracellular Ca(2+) levels. Autophosphorylated in vitro. Autophosphorylation does not affect membrane localization in vitro.

It is found in the membrane. Its subcellular location is the cell membrane. The protein localises to the parasitophorous vacuole membrane. The protein resides in the cytoplasm. It localises to the cell projection. It is found in the cilium. Its subcellular location is the flagellum. The protein localises to the host cell membrane. The enzyme catalyses L-seryl-[protein] + ATP = O-phospho-L-seryl-[protein] + ADP + H(+). It carries out the reaction L-threonyl-[protein] + ATP = O-phospho-L-threonyl-[protein] + ADP + H(+). With respect to regulation, activated by calcium. Upon calcium binding to the EF-hand domains, the C-terminus of the junction domain (J domain) undergoes a conformational change which results in the dissociation of the pseudo-substrate inhibitory motif from the catalytic domain. This, in turn may facilitate the autophosphorylation of the activation loop at Thr-231, which leads to the kinase activation. May be negatively regulated by PKA-mediated phosphorylation. Inhibited by purfalcamine. Its function is as follows. Calcium-dependent protein kinase which acts as a sensor and effector of intracellular Ca(2+) levels probably in part downstream of cGMP-activated PKG kinase. By phosphorylating various proteins, required for microneme secretion and thus merozoite egress from and invasion of host erythrocytes. During gametogenesis, essential for the development of both male and female gametes. Phosphorylates SERA5 p50 which enhances SERA5 p50 protease activity; however, SERA5 p50 protease activity has been shown in other studies to be controversial. Probably by phosphorylating SERA5 p50, plays a role in merozoite egress from host erythrocytes. Probably prior or during merozoite invasion of host erythrocytes, phosphorylates rhoptry protein RhopH3 which is required for RhopH3 localization to rhoptries and for its secretion. Probably in late schizonts, phosphorylates myosin A tail domain-interacting protein MTIP and glideosome-associated protein 45 GAP45, both of which are components of the motor complex that generates the force required by the parasite to invade host cells. In late schizonts, phosphorylates inner membrane complex protein IMC1g. In late schizonts, phosphorylates PKA regulatory subunit PKAr in a calcium-dependent manner, which may contribute to the dissociation of regulatory PKAr and catalytic PKAc subunits and promote the activation of PKAc. May phosphorylate raf kinase inhibitory protein RKIP which in turn may regulate CDPK1 catalytic activity. May phosphorylate proteins of the host erythrocyte membranes. This Plasmodium falciparum (isolate 3D7) protein is Calcium-dependent protein kinase 1.